Here is a 388-residue protein sequence, read N- to C-terminus: Succinate--CoA ligase [ADP-forming] subunit beta (388 aa).

Residues 9 to 244 enclose the ATP-grasp domain; sequence KQLFAEYGLP…PSQDDAREAH (236 aa). Residues Lys-46, 53–55, Glu-99, Thr-102, and Glu-107 contribute to the ATP site; that span reads GRG. The Mg(2+) site is built by Asn-199 and Asp-213. Residues Asn-264 and 321 to 323 each bind substrate; that span reads GIV.

The protein belongs to the succinate/malate CoA ligase beta subunit family. Heterotetramer of two alpha and two beta subunits. Mg(2+) is required as a cofactor.

It carries out the reaction succinate + ATP + CoA = succinyl-CoA + ADP + phosphate. The enzyme catalyses GTP + succinate + CoA = succinyl-CoA + GDP + phosphate. It participates in carbohydrate metabolism; tricarboxylic acid cycle; succinate from succinyl-CoA (ligase route): step 1/1. Its function is as follows. Succinyl-CoA synthetase functions in the citric acid cycle (TCA), coupling the hydrolysis of succinyl-CoA to the synthesis of either ATP or GTP and thus represents the only step of substrate-level phosphorylation in the TCA. The beta subunit provides nucleotide specificity of the enzyme and binds the substrate succinate, while the binding sites for coenzyme A and phosphate are found in the alpha subunit. This Pseudomonas entomophila (strain L48) protein is Succinate--CoA ligase [ADP-forming] subunit beta.